The sequence spans 151 residues: Peptide deformylase (151 aa).

The Fe cation site is built by cysteine 88 and histidine 130. Residue glutamate 131 is part of the active site. Histidine 134 contacts Fe cation.

This sequence belongs to the polypeptide deformylase family. Fe(2+) is required as a cofactor.

It catalyses the reaction N-terminal N-formyl-L-methionyl-[peptide] + H2O = N-terminal L-methionyl-[peptide] + formate. Its function is as follows. Removes the formyl group from the N-terminal Met of newly synthesized proteins. Requires at least a dipeptide for an efficient rate of reaction. N-terminal L-methionine is a prerequisite for activity but the enzyme has broad specificity at other positions. The protein is Peptide deformylase of Heliobacterium modesticaldum (strain ATCC 51547 / Ice1).